We begin with the raw amino-acid sequence, 780 residues long: Striatin (780 aa).

Residues 53–120 are a coiled coil; the sequence is LHFLQHEWAR…QERAKYHKLK (68 aa). The interval 55–63 is caveolin-binding; it reads FLQHEWARF. The segment at 123–150 is disordered; that stretch reads TELNQGDMKPPSYDSDEGNETEVQPQQN. S137 carries the post-translational modification Phosphoserine. The tract at residues 149–166 is calmodulin-binding; the sequence is QNSQLMWKQGRQLLRQYL. Phosphothreonine is present on T225. S227, S229, S245, and S259 each carry phosphoserine. Disordered regions lie at residues 289–312, 334–353, and 364–392; these read DFLV…DWEK, EQYK…NRSK, and VDEL…ELSR. A compositionally biased stretch (basic and acidic residues) spans 299–312; sequence NESRSAGDGTDWEK. The segment covering 338–351 has biased composition (basic residues); it reads KERKGKKGVKRPNR. 6 WD repeats span residues 461-500, 514-553, 567-606, 662-701, 704-743, and 750-780; these read SHFD…PAKK, AHKG…VDPY, GHTD…PALS, SSSC…LIHS, AHLE…CIQE, and KFEE…KVFV.

Belongs to the WD repeat striatin family. In terms of assembly, part of the core of STRIPAK complexes composed of PP2A catalytic and scaffolding subunits, the striatins (PP2A regulatory subunits), the striatin-associated proteins MOB4, STRIP1 and STRIP2, PDCD10 and members of the STE20 kinases, such as STK24 and STK26. Interacts with CTTNBP2; this interaction may regulate dendritic spine distribution of STRN. Activation of glutamate receptors weakens the interaction with CTTNBP2. Mainly expressed in brain but is also expressed at low levels in various tissues such as kidney, spleen, skeletal muscle and lung.

It localises to the cytoplasm. It is found in the membrane. The protein resides in the cell projection. The protein localises to the dendritic spine. In terms of biological role, calmodulin-binding scaffolding protein which is the center of the striatin-interacting phosphatase and kinase (STRIPAK) complexes. STRIPAK complexes have critical roles in protein (de)phosphorylation and are regulators of multiple signaling pathways including Hippo, MAPK, nuclear receptor and cytoskeleton remodeling. Different types of STRIPAK complexes are involved in a variety of biological processes such as cell growth, differentiation, apoptosis, metabolism and immune regulation. This chain is Striatin (Strn), found in Mus musculus (Mouse).